The following is a 106-amino-acid chain: Cell division topological specificity factor (106 aa).

The protein belongs to the MinE family.

Functionally, prevents the cell division inhibition by proteins MinC and MinD at internal division sites while permitting inhibition at polar sites. This ensures cell division at the proper site by restricting the formation of a division septum at the midpoint of the long axis of the cell. The sequence is that of Cell division topological specificity factor from Prochlorococcus marinus (strain SARG / CCMP1375 / SS120).